The sequence spans 425 residues: 3-isopropylmalate dehydratase large subunit (425 aa).

[4Fe-4S] cluster contacts are provided by C305, C365, and C368.

This sequence belongs to the aconitase/IPM isomerase family. LeuC type 2 subfamily. As to quaternary structure, heterodimer of LeuC and LeuD. The cofactor is [4Fe-4S] cluster.

It catalyses the reaction (2R,3S)-3-isopropylmalate = (2S)-2-isopropylmalate. It functions in the pathway amino-acid biosynthesis; L-leucine biosynthesis; L-leucine from 3-methyl-2-oxobutanoate: step 2/4. Functionally, catalyzes the isomerization between 2-isopropylmalate and 3-isopropylmalate, via the formation of 2-isopropylmaleate. In Clostridioides difficile (strain 630) (Peptoclostridium difficile), this protein is 3-isopropylmalate dehydratase large subunit.